A 203-amino-acid chain; its full sequence is Transcriptional regulator GfcR (203 aa).

The protein belongs to the purine/pyrimidine phosphoribosyltransferase family. GfcR subfamily.

The protein is Transcriptional regulator GfcR of Methanococcoides burtonii (strain DSM 6242 / NBRC 107633 / OCM 468 / ACE-M).